We begin with the raw amino-acid sequence, 3071 residues long: Intermembrane lipid transfer protein vps1301 (3071 aa).

The 114-residue stretch at 2 to 115 (LEGLVAGLLN…QQALKQEQLD (114 aa)) folds into the Chorein N-terminal domain. Positions 2143 to 2415 (HIEIFSPYII…KYSWDYPCCA (273 aa)) constitute an SHR-BD domain.

It belongs to the VPS13 family.

Its subcellular location is the golgi apparatus. The protein resides in the trans-Golgi network. Mediates the transfer of lipids between membranes at organelle contact sites. May play a role in mitochondrial lipid homeostasis, Golgi vesicle transport, reticulophagy, actin cytoskeleton organization and formation of the forespore membrane. This is Intermembrane lipid transfer protein vps1301 from Schizosaccharomyces pombe (strain 972 / ATCC 24843) (Fission yeast).